The chain runs to 293 residues: 4-diphosphocytidyl-2-C-methyl-D-erythritol kinase (293 aa).

Residue lysine 10 is part of the active site. 96–106 (PIAAGLGGGSS) is an ATP binding site. The active site involves aspartate 138.

This sequence belongs to the GHMP kinase family. IspE subfamily.

The enzyme catalyses 4-CDP-2-C-methyl-D-erythritol + ATP = 4-CDP-2-C-methyl-D-erythritol 2-phosphate + ADP + H(+). Its pathway is isoprenoid biosynthesis; isopentenyl diphosphate biosynthesis via DXP pathway; isopentenyl diphosphate from 1-deoxy-D-xylulose 5-phosphate: step 3/6. Its function is as follows. Catalyzes the phosphorylation of the position 2 hydroxy group of 4-diphosphocytidyl-2C-methyl-D-erythritol. This chain is 4-diphosphocytidyl-2-C-methyl-D-erythritol kinase, found in Caulobacter sp. (strain K31).